The sequence spans 258 residues: Transcription cofactor vestigial-like protein 1 (258 aa).

2 stretches are compositionally biased toward polar residues: residues 55 to 65 (PQELTPSSQSE) and 74 to 87 (SMSP…SPWT). Positions 55-93 (PQELTPSSQSEGVMLKNDDSMSPNQWRYSSPWTKPQPEV) are disordered.

It belongs to the vestigial family. As to quaternary structure, interacts with TEFs.

It localises to the nucleus. Its function is as follows. May act as a specific coactivator for the mammalian TEFs. In Homo sapiens (Human), this protein is Transcription cofactor vestigial-like protein 1 (VGLL1).